The sequence spans 1137 residues: DNA-directed RNA polymerase III subunit RPC2 (1137 aa).

Residues 1084–1099 (DVCRTCGRMAYCSWCH) form a C4-type zinc finger. Zn(2+)-binding residues include cysteine 1086, cysteine 1089, cysteine 1098, and cysteine 1101.

The protein belongs to the RNA polymerase beta chain family. As to quaternary structure, component of the RNA polymerase III (Pol III) complex consisting of 17 subunits.

Its subcellular location is the nucleus. It catalyses the reaction RNA(n) + a ribonucleoside 5'-triphosphate = RNA(n+1) + diphosphate. Functionally, DNA-dependent RNA polymerase catalyzes the transcription of DNA into RNA using the four ribonucleoside triphosphates as substrates. Second largest core component of RNA polymerase III which synthesizes small RNAs, such as 5S rRNA and tRNAs. Proposed to contribute to the polymerase catalytic activity and forms the polymerase active center together with the largest subunit. Pol III is composed of mobile elements and Polr3B is part of the core element with the central large cleft and probably a clamp element that moves to open and close the cleft. The chain is DNA-directed RNA polymerase III subunit RPC2 from Drosophila melanogaster (Fruit fly).